The chain runs to 490 residues: Asparagine--tRNA ligase (490 aa).

The protein belongs to the class-II aminoacyl-tRNA synthetase family. Homodimer.

It is found in the cytoplasm. The catalysed reaction is tRNA(Asn) + L-asparagine + ATP = L-asparaginyl-tRNA(Asn) + AMP + diphosphate + H(+). The sequence is that of Asparagine--tRNA ligase from Rhodopirellula baltica (strain DSM 10527 / NCIMB 13988 / SH1).